The primary structure comprises 205 residues: Probable GTP-binding protein EngB (205 aa).

An EngB-type G domain is found at 27-201; sequence QGMEVAFAGR…QNKLNAWFSG (175 aa). GTP is bound by residues 35-42, 62-66, 80-83, 147-150, and 180-182; these read GRSNAGKS, GRTQL, DLPG, TKVD, and FSS. The Mg(2+) site is built by Ser42 and Thr64.

The protein belongs to the TRAFAC class TrmE-Era-EngA-EngB-Septin-like GTPase superfamily. EngB GTPase family. Mg(2+) is required as a cofactor.

Functionally, necessary for normal cell division and for the maintenance of normal septation. In Hamiltonella defensa subsp. Acyrthosiphon pisum (strain 5AT), this protein is Probable GTP-binding protein EngB.